Consider the following 248-residue polypeptide: MNQVLTETRPIRLKGRSFLAMVLSPELPLDGWLELLDDLARRSSGFFLGRPVVLDMENLAIERAQLVYLLQALNDRGVWIMGVEGARPSLLGPGMPPAMRGGQPAADFEAPAGEPQANPGAPEPQISQAVRAPGHAVHAMPSMVITEPVRSGQSVYFPEGDVTIVGSVASGAEVVAGGSIHIYGTLRGRALAGTAGNTSARIFCRKLEAELVAIDGLYKTAEDLEPRFRGQAVQLWLDGDYMMIDTLS.

Residues 94-126 (GMPPAMRGGQPAADFEAPAGEPQANPGAPEPQI) form a disordered region.

Belongs to the MinC family. In terms of assembly, interacts with MinD and FtsZ.

Functionally, cell division inhibitor that blocks the formation of polar Z ring septums. Rapidly oscillates between the poles of the cell to destabilize FtsZ filaments that have formed before they mature into polar Z rings. Prevents FtsZ polymerization. This is Probable septum site-determining protein MinC from Brucella suis biovar 1 (strain 1330).